A 301-amino-acid polypeptide reads, in one-letter code: Polyamine aminopropyltransferase (301 aa).

The 237-residue stretch at Trp-4–Val-240 folds into the PABS domain. Gln-33 is an S-methyl-5'-thioadenosine binding site. 2 residues coordinate spermidine: His-64 and Glu-89. S-methyl-5'-thioadenosine-binding positions include Asp-109 and Asp-141–Gly-142. Asp-159 serves as the catalytic Proton acceptor.

Belongs to the spermidine/spermine synthase family. In terms of assembly, homodimer or homotetramer.

Its subcellular location is the cytoplasm. The enzyme catalyses S-adenosyl 3-(methylsulfanyl)propylamine + putrescine = S-methyl-5'-thioadenosine + spermidine + H(+). The protein operates within amine and polyamine biosynthesis; spermidine biosynthesis; spermidine from putrescine: step 1/1. Functionally, catalyzes the irreversible transfer of a propylamine group from the amino donor S-adenosylmethioninamine (decarboxy-AdoMet) to putrescine (1,4-diaminobutane) to yield spermidine. The chain is Polyamine aminopropyltransferase from Saccharolobus islandicus (strain L.S.2.15 / Lassen #1) (Sulfolobus islandicus).